The primary structure comprises 71 residues: Putative membrane protein insertion efficiency factor (71 aa).

It belongs to the UPF0161 family.

It is found in the cell inner membrane. In terms of biological role, could be involved in insertion of integral membrane proteins into the membrane. The protein is Putative membrane protein insertion efficiency factor of Nitrosospira multiformis (strain ATCC 25196 / NCIMB 11849 / C 71).